We begin with the raw amino-acid sequence, 184 residues long: MYQLKKLYNEELKAKLSEELGIKNPMLLPKLEKIVISVGAGDHAKDTKVMQNIADTISLIAGQKAVITIAKKSVAGFKMREGMPMGVKVTLRGNQMYNFLEKLISIALPRVKDFRGVPRNGFDGRGNYSFGLNEQLMFPEVVYDDIMVSHGMNITMVTTTNNDKEAFKMLELFGMPFAKGRVNG.

Belongs to the universal ribosomal protein uL5 family. Part of the 50S ribosomal subunit; part of the 5S rRNA/L5/L18/L25 subcomplex. Contacts the 5S rRNA and the P site tRNA. Forms a bridge to the 30S subunit in the 70S ribosome.

Its function is as follows. This is one of the proteins that bind and probably mediate the attachment of the 5S RNA into the large ribosomal subunit, where it forms part of the central protuberance. In the 70S ribosome it contacts protein S13 of the 30S subunit (bridge B1b), connecting the 2 subunits; this bridge is implicated in subunit movement. Contacts the P site tRNA; the 5S rRNA and some of its associated proteins might help stabilize positioning of ribosome-bound tRNAs. The protein is Large ribosomal subunit protein uL5 of Wolinella succinogenes (strain ATCC 29543 / DSM 1740 / CCUG 13145 / JCM 31913 / LMG 7466 / NCTC 11488 / FDC 602W) (Vibrio succinogenes).